Consider the following 314-residue polypeptide: Glutathione synthetase (314 aa).

The ATP-grasp domain maps to 125-311 (EKIAAQLFPQ…IAGQLFDAIE (187 aa)). 151 to 208 (FVQKQEQAILKPLDGMGGHSIFRSSNGDPNLNVILETLTDGGRTLAIAQRYLQQIIEG) serves as a coordination point for ATP. Mg(2+) is bound by residues glutamate 282 and asparagine 284.

The protein belongs to the prokaryotic GSH synthase family. Mg(2+) serves as cofactor. Requires Mn(2+) as cofactor.

The enzyme catalyses gamma-L-glutamyl-L-cysteine + glycine + ATP = glutathione + ADP + phosphate + H(+). Its pathway is sulfur metabolism; glutathione biosynthesis; glutathione from L-cysteine and L-glutamate: step 2/2. The protein is Glutathione synthetase of Xylella fastidiosa (strain Temecula1 / ATCC 700964).